The sequence spans 1571 residues: Pentafunctional AROM polypeptide 2 (1571 aa).

The interval 1 to 380 (MAEPTKISIL…YEPKASVVSN (380 aa)) is 3-dehydroquinate synthase. NAD(+) is bound by residues 44–46 (DTN), 81–84 (ENSK), 112–114 (GGV), and Asp117. Arg128 contributes to the 7-phospho-2-dehydro-3-deoxy-D-arabino-heptonate binding site. Residue 137–138 (TT) coordinates NAD(+). Residues Asp144 and Lys150 each coordinate 7-phospho-2-dehydro-3-deoxy-D-arabino-heptonate. Lys159 is an NAD(+) binding site. Residue Asn160 participates in 7-phospho-2-dehydro-3-deoxy-D-arabino-heptonate binding. Residues 177–180 (FIDT) and Asn188 contribute to the NAD(+) site. Glu192 is a Zn(2+) binding site. Residues 192 to 195 (EVIK) and Lys246 contribute to the 7-phospho-2-dehydro-3-deoxy-D-arabino-heptonate site. Residue Glu256 is the Proton acceptor; for 3-dehydroquinate synthase activity of the active site. Residues 260–264 (RNLLN) and His267 each bind 7-phospho-2-dehydro-3-deoxy-D-arabino-heptonate. His267 provides a ligand contact to Zn(2+). Catalysis depends on His271, which acts as the Proton acceptor; for 3-dehydroquinate synthase activity. Residues His283 and Lys352 each contribute to the 7-phospho-2-dehydro-3-deoxy-D-arabino-heptonate site. A Zn(2+)-binding site is contributed by His283. The interval 393–838 (VIPGVPKNLN…WDALKQKFGV (446 aa)) is EPSP synthase. Cys820 serves as the catalytic For EPSP synthase activity. Residues 859 to 1051 (NASIIIIGMR…RKKHLSFFVS (193 aa)) form a shikimate kinase region. 866–873 (GMRGAGKT) serves as a coordination point for ATP. Residues 1052–1273 (LTLPDLRESG…AAPGQLSAAE (222 aa)) are 3-dehydroquinase. His1175 (proton acceptor; for 3-dehydroquinate dehydratase activity) is an active-site residue. Lys1203 functions as the Schiff-base intermediate with substrate; for 3-dehydroquinate dehydratase activity in the catalytic mechanism. Positions 1286–1571 (AKKFAVLGKP…NAVLGTNETK (286 aa)) are shikimate dehydrogenase.

This sequence in the N-terminal section; belongs to the sugar phosphate cyclases superfamily. Dehydroquinate synthase family. The protein in the 2nd section; belongs to the EPSP synthase family. In the 3rd section; belongs to the shikimate kinase family. It in the 4th section; belongs to the type-I 3-dehydroquinase family. This sequence in the C-terminal section; belongs to the shikimate dehydrogenase family. As to quaternary structure, homodimer. Zn(2+) serves as cofactor.

It is found in the cytoplasm. The enzyme catalyses 7-phospho-2-dehydro-3-deoxy-D-arabino-heptonate = 3-dehydroquinate + phosphate. It catalyses the reaction 3-dehydroquinate = 3-dehydroshikimate + H2O. The catalysed reaction is shikimate + NADP(+) = 3-dehydroshikimate + NADPH + H(+). It carries out the reaction shikimate + ATP = 3-phosphoshikimate + ADP + H(+). The enzyme catalyses 3-phosphoshikimate + phosphoenolpyruvate = 5-O-(1-carboxyvinyl)-3-phosphoshikimate + phosphate. The protein operates within metabolic intermediate biosynthesis; chorismate biosynthesis; chorismate from D-erythrose 4-phosphate and phosphoenolpyruvate: step 2/7. It functions in the pathway metabolic intermediate biosynthesis; chorismate biosynthesis; chorismate from D-erythrose 4-phosphate and phosphoenolpyruvate: step 3/7. It participates in metabolic intermediate biosynthesis; chorismate biosynthesis; chorismate from D-erythrose 4-phosphate and phosphoenolpyruvate: step 4/7. Its pathway is metabolic intermediate biosynthesis; chorismate biosynthesis; chorismate from D-erythrose 4-phosphate and phosphoenolpyruvate: step 5/7. The protein operates within metabolic intermediate biosynthesis; chorismate biosynthesis; chorismate from D-erythrose 4-phosphate and phosphoenolpyruvate: step 6/7. Its function is as follows. The AROM polypeptide catalyzes 5 consecutive enzymatic reactions in prechorismate polyaromatic amino acid biosynthesis. The protein is Pentafunctional AROM polypeptide 2 of Talaromyces marneffei (strain ATCC 18224 / CBS 334.59 / QM 7333) (Penicillium marneffei).